The primary structure comprises 463 residues: Argininosuccinate lyase (463 aa).

The protein belongs to the lyase 1 family. Argininosuccinate lyase subfamily.

It is found in the cytoplasm. It catalyses the reaction 2-(N(omega)-L-arginino)succinate = fumarate + L-arginine. The protein operates within amino-acid biosynthesis; L-arginine biosynthesis; L-arginine from L-ornithine and carbamoyl phosphate: step 3/3. The polypeptide is Argininosuccinate lyase (Staphylococcus epidermidis (strain ATCC 35984 / DSM 28319 / BCRC 17069 / CCUG 31568 / BM 3577 / RP62A)).